We begin with the raw amino-acid sequence, 619 residues long: Transcription factor 7-like 2 (619 aa).

Over residues 1–11 (MPQLNGGGGDD) the composition is skewed to gly residues. Residues 1-53 (MPQLNGGGGDDLGANDELISFKDEGEQEEKSSENSSAERDLADVKSSLVNESE) are CTNNB1-binding. Residues 1–96 (MPQLNGGGGD…AKRQDGGLFK (96 aa)) are disordered. The span at 19–43 (ISFKDEGEQEEKSSENSSAERDLAD) shows a compositional bias: basic and acidic residues. A Glycyl lysine isopeptide (Lys-Gly) (interchain with G-Cter in SUMO2) cross-link involves residue Lys-22. A compositionally biased stretch (polar residues) spans 47–57 (SLVNESETNQN). Positions 63–91 (EAERRPPPRSESFRDKSRESLEEAAKRQD) are enriched in basic and acidic residues. Phosphothreonine; by NLK is present on residues Thr-201 and Thr-212. Residues 201 to 395 (TPLITYSNEH…RRWHALSREE (195 aa)) form a mediates interaction with MAD2L2 region. A compositionally biased stretch (polar residues) spans 318-328 (TVKQESSQSDV). 4 disordered regions span residues 318 to 350 (TVKQ…KPHI), 420 to 441 (RDNY…TNEH), 496 to 547 (CLSP…AHLS), and 574 to 619 (DLPP…KSLE). Residue Lys-320 forms a Glycyl lysine isopeptide (Lys-Gly) (interchain with G-Cter in SUMO) linkage. A compositionally biased stretch (basic and acidic residues) spans 335-346 (KHQDSKKEEEKK). Residues 350–418 (IKKPLNAFML…LHMQLYPGWS (69 aa)) constitute a DNA-binding region (HMG box). The Nuclear localization signal motif lies at 425–430 (KKKKRK). The segment at 459-505 (SAPKKCRARFGLDQQNNWCGPCRRKKKCVRYIQGEGSCLSPPSSDGS) is promoter-specific activation domain. The segment covering 496-508 (CLSPPSSDGSLLD) has biased composition (low complexity). Residue Lys-539 forms a Glycyl lysine isopeptide (Lys-Gly) (interchain with G-Cter in SUMO2) linkage. The span at 574 to 603 (DLPPAALQPAAPSSSIAQPSTSSLHSHSSL) shows a compositional bias: low complexity. Over residues 604-619 (AGTQPQPLSLVTKSLE) the composition is skewed to polar residues.

This sequence belongs to the TCF/LEF family. As to quaternary structure, interacts with TGFB1I1. Interacts with CTNNB1 (via the armadillo repeat); forms stable transcription complex. Interacts with EP300. Interacts with NLK. Interacts with CCDC85B (probably through the HMG box); prevents interaction with CTNNB1. Interacts with TNIK. Interacts with MAD2L2; prevents TCF7L2/TCF4 binding to promZIPK/DAPK3oters, negatively modulating its transcriptional activity. Interacts with ZIPK/DAPK3. Interacts with XIAP/BIRC4 and TLE3. Interacts with DDIT3/CHOP. The CTNNB1 and TCF7L2/TCF4 complex interacts with PML (isoform PML-4). Identified in a complex with CTNNB1 and FERMT2. Interacts with SPIN1. Interacts with C11orf84/SPINDOC in a SPIN1-dependent manner. Interacts with DAZAP2; the interaction results in localization of DAZAP2 to the nucleus. Post-translationally, in vitro, phosphorylated by TNIK. Phosphorylated at Thr-201 and/or Thr-212 by NLK. Phosphorylation by NLK at these sites inhibits DNA-binding by TCF7L2/TCF4, thereby preventing transcriptional activation of target genes of the canonical Wnt/beta-catenin signaling pathway. In terms of processing, polysumoylated. Sumoylation is enhanced by PIAS family members and desumoylation is enhanced by SENP2. Sumoylation/desumoylation regulates TCF7L2/TCF4 transcription activity in the Wnt/beta-catenin signaling pathway without altering interaction with CTNNB1 nor binding to DNA. In terms of tissue distribution, detected in epithelium from small intestine, with the highest expression at the top of the crypts and a gradient of expression from crypt to villus. Detected in colon epithelium and colon cancer, and in epithelium from mammary gland and carcinomas derived therefrom.

It is found in the nucleus. It localises to the PML body. In terms of biological role, participates in the Wnt signaling pathway and modulates MYC expression by binding to its promoter in a sequence-specific manner. Acts as a repressor in the absence of CTNNB1, and as activator in its presence. Activates transcription from promoters with several copies of the Tcf motif 5'-CCTTTGATC-3' in the presence of CTNNB1. TLE1, TLE2, TLE3 and TLE4 repress transactivation mediated by TCF7L2/TCF4 and CTNNB1. Expression of dominant-negative mutants results in cell-cycle arrest in G1. Necessary for the maintenance of the epithelial stem-cell compartment of the small intestine. In Homo sapiens (Human), this protein is Transcription factor 7-like 2 (TCF7L2).